The following is a 968-amino-acid chain: MPSILDKVLRMGEGRILKKLTGIVAQVNAHEDTVREFTDAELREETDVFKARLADGETLEAILPEAFATVREAARRTLGQRPHDVQVMGGAALHLGNIAEMKTGEGKTLAATLPAYLNALSGDGVHVVTVNDYLAQYQSDLMGRVYRFLGLTTGCILSGQKPEERRRHYAADITYGTNNELGFDYLRDNMAWSSGELVQRGHNFVIVDEVDSILIDEARTPLIISGPASGDANKWYAEFARVARRLTRESDYEVDEKKRNVGVLEPGIEKVEDYLGIDNLYESLNTPLIGFLNNAIKAKELFKRDKDYVVLKGEVLIVDEHTGRILAGRRYNEGMHQAIEAKEGVAIKAENQTLATITLQNYFRLYGKLAGMTGTAMTEAAEFQGTYKVGVVPIPTNMPMARLDKPDLVFKNEDGKFDAVVEDIVERHAAGQPVLVGTTSVEKSELLSTKLKRQGVPHEVLNAKQHAREASIVAMAGRKGAVTVATNMAGRGTDIMLGGNAEHLAIATLAEQGLDPNETPEEYEAAWPDALEEATTSVAAEHDEVVDLGGLYVLGTERHESRRIDNQLRGRSGRQGDPGESRFYLSMGDDLMRLFNSGLAERFMGSSAYPDDMPLESKLVTRGIASAQGQVEARNFEIRKNVLKYDDVLSRQRAVIYTDRRRVLEGEDLAEQVQGFLTDVVTAYIESATQAGAPESWDLDELWTALKAVYPISITPEEVVSEAGNATRVTPEMLTREILSDAEHAYARREEELTPDVMRQLERRVVLAVLDRKWREHLYEMDYLKEGIGLRAMAQRDPLVEYQREGFQLFSAMRDAIKEEAVGYLFNLEVKRPEPAESAEESTDGAPVVPAVPTGSDGEPLAPEQEAVPAGEPERPAKRRPAARVATRPAAEVDPLGLDTPERPAALQYSAPSSDGGSSFSEGRVVRSEGGTSGGSARPAAGASSGGGGGGANREARRRAAKAAKKRR.

Residues glutamine 86, 104-108, and aspartate 494 contribute to the ATP site; that span reads GEGKT. A disordered region spans residues 835–968; it reads PAESAEESTD…RAAKAAKKRR (134 aa). Composition is skewed to low complexity over residues 883 to 892 and 910 to 923; these read ARVATRPAAE and SAPSSDGGSSFSEG. Over residues 956 to 968 the composition is skewed to basic residues; sequence ARRRAAKAAKKRR.

The protein belongs to the SecA family. Monomer and homodimer. Part of the essential Sec protein translocation apparatus which comprises SecA, SecYEG and auxiliary proteins SecDF. Other proteins may also be involved.

The protein localises to the cell membrane. It is found in the cytoplasm. The enzyme catalyses ATP + H2O + cellular proteinSide 1 = ADP + phosphate + cellular proteinSide 2.. Functionally, part of the Sec protein translocase complex. Interacts with the SecYEG preprotein conducting channel. Has a central role in coupling the hydrolysis of ATP to the transfer of proteins into and across the cell membrane, serving as an ATP-driven molecular motor driving the stepwise translocation of polypeptide chains across the membrane. This Beutenbergia cavernae (strain ATCC BAA-8 / DSM 12333 / CCUG 43141 / JCM 11478 / NBRC 16432 / NCIMB 13614 / HKI 0122) protein is Protein translocase subunit SecA.